The following is a 227-amino-acid chain: Cytochrome c oxidase subunit 2 (227 aa).

At 1 to 14 the chain is on the mitochondrial intermembrane side; sequence MAYPFQLGLQDATS. The chain crosses the membrane as a helical span at residues 15 to 45; it reads PIMEELMNFHDHTLMIVFLISSLVLYIISLM. Residues 46-59 lie on the Mitochondrial matrix side of the membrane; sequence LTTKLTHTSTMDAQ. A helical transmembrane segment spans residues 60-87; the sequence is EVETIWTILPAAILILIALPSLRILYMM. Over 88–227 the chain is Mitochondrial intermembrane; the sequence is DEINNPALTV…YFENWSASMI (140 aa). Positions 161, 196, 198, 200, 204, and 207 each coordinate Cu cation. Mg(2+) is bound at residue Glu198. Tyr218 carries the post-translational modification Phosphotyrosine.

The protein belongs to the cytochrome c oxidase subunit 2 family. Component of the cytochrome c oxidase (complex IV, CIV), a multisubunit enzyme composed of 14 subunits. The complex is composed of a catalytic core of 3 subunits MT-CO1, MT-CO2 and MT-CO3, encoded in the mitochondrial DNA, and 11 supernumerary subunits COX4I, COX5A, COX5B, COX6A, COX6B, COX6C, COX7A, COX7B, COX7C, COX8 and NDUFA4, which are encoded in the nuclear genome. The complex exists as a monomer or a dimer and forms supercomplexes (SCs) in the inner mitochondrial membrane with NADH-ubiquinone oxidoreductase (complex I, CI) and ubiquinol-cytochrome c oxidoreductase (cytochrome b-c1 complex, complex III, CIII), resulting in different assemblies (supercomplex SCI(1)III(2)IV(1) and megacomplex MCI(2)III(2)IV(2)). Found in a complex with TMEM177, COA6, COX18, COX20, SCO1 and SCO2. Interacts with TMEM177 in a COX20-dependent manner. Interacts with COX20. Interacts with COX16. Requires Cu cation as cofactor.

It is found in the mitochondrion inner membrane. The catalysed reaction is 4 Fe(II)-[cytochrome c] + O2 + 8 H(+)(in) = 4 Fe(III)-[cytochrome c] + 2 H2O + 4 H(+)(out). Its function is as follows. Component of the cytochrome c oxidase, the last enzyme in the mitochondrial electron transport chain which drives oxidative phosphorylation. The respiratory chain contains 3 multisubunit complexes succinate dehydrogenase (complex II, CII), ubiquinol-cytochrome c oxidoreductase (cytochrome b-c1 complex, complex III, CIII) and cytochrome c oxidase (complex IV, CIV), that cooperate to transfer electrons derived from NADH and succinate to molecular oxygen, creating an electrochemical gradient over the inner membrane that drives transmembrane transport and the ATP synthase. Cytochrome c oxidase is the component of the respiratory chain that catalyzes the reduction of oxygen to water. Electrons originating from reduced cytochrome c in the intermembrane space (IMS) are transferred via the dinuclear copper A center (CU(A)) of subunit 2 and heme A of subunit 1 to the active site in subunit 1, a binuclear center (BNC) formed by heme A3 and copper B (CU(B)). The BNC reduces molecular oxygen to 2 water molecules using 4 electrons from cytochrome c in the IMS and 4 protons from the mitochondrial matrix. The polypeptide is Cytochrome c oxidase subunit 2 (MT-CO2) (Lemniscomys barbarus (Barbary striped grass mouse)).